Here is a 236-residue protein sequence, read N- to C-terminus: Protein EVI2A (236 aa).

An N-terminal signal peptide occupies residues 1–30 (MPTDMEHTGHYLHLAFLMTTVFSLSPGTKA). Residues asparagine 31, asparagine 38, asparagine 49, asparagine 73, and asparagine 112 are each glycosylated (N-linked (GlcNAc...) asparagine). Topologically, residues 31 to 133 (NYTRLWANST…DVCAENNNNM (103 aa)) are extracellular. A helical transmembrane segment spans residues 134-154 (AMLICLIIIAVLFLICTFLFL). At 155–236 (STVVLANKVS…TEKLTNKQIG (82 aa)) the chain is on the cytoplasmic side. Residue serine 211 is modified to Phosphoserine. Residues 217–236 (ATRERKDEEGTEKLTNKQIG) are disordered. Residues 218–236 (TRERKDEEGTEKLTNKQIG) are compositionally biased toward basic and acidic residues.

This sequence belongs to the EVI2A family.

It localises to the membrane. Functionally, may complex with itself or/and other proteins within the membrane, to function as part of a cell-surface receptor. The chain is Protein EVI2A (EVI2A) from Homo sapiens (Human).